The following is a 321-amino-acid chain: MTQNTFFPIFPHQHLLGIKDLNVQDLIVLLDRANANIPFSKKIDKKQSPLHGCTQINLFFEASTRTQSSFELAGKRLGADVMSMPIGNSSVKKGETLIDTATTLNAMKPDILVIRHSCAGAAALLAQKVDCCIINAGDGAHEHPTQALLDALTIKRAKGRIEGLTVVICGDILHSRVARSNILSLNALGARVRAVAPSTLLPAGIADMGVEVYNTMKEGLKGADVIMMLRLQRERMTDSFIPSIREYFHYFGLHKENLSYAKSDCIILHPGPINRGIEIASDIADGPQSMIHTQVEMGIAVRMAVMEALLDSRLKASGEKK.

Residues Arg65 and Thr66 each contribute to the carbamoyl phosphate site. Residue Lys93 coordinates L-aspartate. Positions 115, 143, and 146 each coordinate carbamoyl phosphate. 2 residues coordinate L-aspartate: Arg176 and Arg230. Residues Gly271 and Pro272 each contribute to the carbamoyl phosphate site.

It belongs to the aspartate/ornithine carbamoyltransferase superfamily. ATCase family. In terms of assembly, heterododecamer (2C3:3R2) of six catalytic PyrB chains organized as two trimers (C3), and six regulatory PyrI chains organized as three dimers (R2).

It catalyses the reaction carbamoyl phosphate + L-aspartate = N-carbamoyl-L-aspartate + phosphate + H(+). It participates in pyrimidine metabolism; UMP biosynthesis via de novo pathway; (S)-dihydroorotate from bicarbonate: step 2/3. Functionally, catalyzes the condensation of carbamoyl phosphate and aspartate to form carbamoyl aspartate and inorganic phosphate, the committed step in the de novo pyrimidine nucleotide biosynthesis pathway. In Bartonella quintana (strain Toulouse) (Rochalimaea quintana), this protein is Aspartate carbamoyltransferase catalytic subunit.